The primary structure comprises 381 residues: Cyclin-dependent kinase inhibitor CIP1 (381 aa).

Basic residues predominate over residues 1–11 (MLLERLHKRLH). The interval 1–30 (MLLERLHKRLHAGSSRRSQENKDKNCKPED) is disordered. Positions 17 to 30 (RSQENKDKNCKPED) are enriched in basic and acidic residues. Residues threonine 65, threonine 69, and threonine 73 each carry the phosphothreonine modification.

As to quaternary structure, interact with the CDC28/CLN2 complex. In terms of processing, phosphorylated during S phase in a CDC28-dependent manner. Phosphorylated at Thr-65 and Thr-73 by HOG1 under osmotic stress. The phosphorylations of Thr-65 and Thr-73 are necessary for CIP1-induced growth inhibition.

It localises to the cytoplasm. Its subcellular location is the nucleus. Its function is as follows. Acts as an inhibitor of the CDC28/CLN2 cyclin-dependent kinase complex. Stabilizes the CDC28 inhibitor SIC1. Negatively regulates the G1/S phase transition. Contributes to osmostress-induced transitory G1 delay. The chain is Cyclin-dependent kinase inhibitor CIP1 from Saccharomyces cerevisiae (strain ATCC 204508 / S288c) (Baker's yeast).